A 602-amino-acid polypeptide reads, in one-letter code: Elongation factor 4 (602 aa).

Positions 7-189 (KRVRNFSIIA…AVVEKVPYPK (183 aa)) constitute a tr-type G domain. GTP-binding positions include 19–24 (DHGKST) and 136–139 (NKID).

This sequence belongs to the TRAFAC class translation factor GTPase superfamily. Classic translation factor GTPase family. LepA subfamily.

It localises to the cell membrane. It carries out the reaction GTP + H2O = GDP + phosphate + H(+). Required for accurate and efficient protein synthesis under certain stress conditions. May act as a fidelity factor of the translation reaction, by catalyzing a one-codon backward translocation of tRNAs on improperly translocated ribosomes. Back-translocation proceeds from a post-translocation (POST) complex to a pre-translocation (PRE) complex, thus giving elongation factor G a second chance to translocate the tRNAs correctly. Binds to ribosomes in a GTP-dependent manner. This chain is Elongation factor 4, found in Clostridium tetani (strain Massachusetts / E88).